A 252-amino-acid chain; its full sequence is Uracil-DNA glycosylase (252 aa).

Residue Asp78 is the Proton acceptor of the active site.

It belongs to the uracil-DNA glycosylase (UDG) superfamily. UNG family.

It localises to the cytoplasm. The enzyme catalyses Hydrolyzes single-stranded DNA or mismatched double-stranded DNA and polynucleotides, releasing free uracil.. Its function is as follows. Excises uracil residues from the DNA which can arise as a result of misincorporation of dUMP residues by DNA polymerase or due to deamination of cytosine. In Bordetella avium (strain 197N), this protein is Uracil-DNA glycosylase.